The sequence spans 372 residues: Hydrogenase-1 small chain (372 aa).

The tat-type signal signal peptide spans 1–45; the sequence is MNNEETFYQAMRRQGVTRRSFLKYCSLAATSLGLGAGMAPKIAWA. Residues 46 to 326 are Periplasmic-facing; sequence LENKPRIPVV…QMGTHSTADT (281 aa). The [4Fe-4S] cluster site is built by cysteine 62, cysteine 65, cysteine 160, cysteine 194, histidine 232, cysteine 235, cysteine 260, and cysteine 266. Cysteine 275, cysteine 294, and cysteine 297 together coordinate [3Fe-4S] cluster. The helical transmembrane segment at 327 to 347 threads the bilayer; sequence VGLTALGVVAAAVGVHAVASA. Residues 347 to 372 are disordered; sequence AVDQRRRHNQQPTETEHQPGNEDKQA. At 348–372 the chain is on the cytoplasmic side; it reads VDQRRRHNQQPTETEHQPGNEDKQA. The span at 360–372 shows a compositional bias: basic and acidic residues; sequence ETEHQPGNEDKQA.

Belongs to the [NiFe]/[NiFeSe] hydrogenase small subunit family. Heterodimer of a large and a small subunit. [4Fe-4S] cluster serves as cofactor. [3Fe-4S] cluster is required as a cofactor. Post-translationally, predicted to be exported by the Tat system. The position of the signal peptide cleavage has not been experimentally proven.

The protein localises to the cell inner membrane. It carries out the reaction H2 + A = AH2. This is one of three E.coli hydrogenases synthesized in response to different physiological conditions. HYD1 is believed to have a role in hydrogen cycling during fermentative growth. The polypeptide is Hydrogenase-1 small chain (hyaA) (Escherichia coli O6:H1 (strain CFT073 / ATCC 700928 / UPEC)).